The primary structure comprises 210 residues: Mating-type-like protein ALPHA2, silenced copy at MTL3 (210 aa).

The homeobox; TALE-type DNA-binding region spans 108–170; it reads ASYRGHRFTR…NRRRKQKSIY (63 aa).

Belongs to the TALE/M-ATYP homeobox family.

It is found in the nucleus. Mating type proteins are sequence specific DNA-binding proteins that act as master switches in yeast differentiation by controlling gene expression in a cell type-specific fashion. This is Mating-type-like protein ALPHA2, silenced copy at MTL3 (MTL3alpha2) from Candida glabrata (strain ATCC 2001 / BCRC 20586 / JCM 3761 / NBRC 0622 / NRRL Y-65 / CBS 138) (Yeast).